Reading from the N-terminus, the 493-residue chain is Endothelial lipase (493 aa).

The signal sequence occupies residues 1–23; it reads MRDPVFLLGFWSLYCCFPAGSLT. A disulfide bridge links Cys-66 with Cys-79. N-linked (GlcNAc...) asparagine glycosylation is found at Asn-67 and Asn-82. Ser-171 (nucleophile) is an active-site residue. Residue Asp-195 is the Charge relay system of the active site. Cys-254 and Cys-274 form a disulfide bridge. The Charge relay system role is filled by His-276. 2 disulfide bridges follow: Cys-299/Cys-318 and Cys-310/Cys-313. 327–339 is a binding site for heparin; it reads KMRKKRNSKMYLK. Residues 349–484 form the PLAT domain; it reads YHYQLKVHMF…SPGQELWFYK (136 aa). Asn-395 carries N-linked (GlcNAc...) asparagine glycosylation. Cysteines 465 and 485 form a disulfide.

Belongs to the AB hydrolase superfamily. Lipase family. As to quaternary structure, head to tail Homodimer. Interacts with apolipoprotein C-2.

It localises to the secreted. It catalyses the reaction a triacylglycerol + H2O = a diacylglycerol + a fatty acid + H(+). The catalysed reaction is a 1,2-diacyl-sn-glycero-3-phosphocholine + H2O = a 2-acyl-sn-glycero-3-phosphocholine + a fatty acid + H(+). The enzyme catalyses 1,2,3-tri-(9Z-octadecenoyl)-glycerol + H2O = di-(9Z)-octadecenoylglycerol + (9Z)-octadecenoate + H(+). It carries out the reaction 1,2,3-tributanoylglycerol + H2O = dibutanoylglycerol + butanoate + H(+). It catalyses the reaction 1,2-dihexadecanoyl-sn-glycero-3-phosphocholine + H2O = hexadecanoyl-sn-glycero-3-phosphocholine + hexadecanoate + H(+). Functionally, exerts both phospholipase and triglyceride lipase activities. More active as a phospholipase than a triglyceride lipase. Hydrolyzes triglycerides, both with short-chain fatty acyl groups (tributyrin) and long-chain fatty acyl groups (triolein) with similar levels of activity toward both types of substrates. Hydrolyzes high density lipoproteins (HDL) more efficiently than other lipoproteins. This chain is Endothelial lipase (Lipg), found in Rattus norvegicus (Rat).